A 460-amino-acid polypeptide reads, in one-letter code: 3-isopropylmalate dehydratase large subunit (460 aa).

3 residues coordinate [4Fe-4S] cluster: C338, C398, and C401.

This sequence belongs to the aconitase/IPM isomerase family. LeuC type 1 subfamily. Heterodimer of LeuC and LeuD. Requires [4Fe-4S] cluster as cofactor.

It carries out the reaction (2R,3S)-3-isopropylmalate = (2S)-2-isopropylmalate. The protein operates within amino-acid biosynthesis; L-leucine biosynthesis; L-leucine from 3-methyl-2-oxobutanoate: step 2/4. Its function is as follows. Catalyzes the isomerization between 2-isopropylmalate and 3-isopropylmalate, via the formation of 2-isopropylmaleate. The protein is 3-isopropylmalate dehydratase large subunit of Streptococcus thermophilus (strain CNRZ 1066).